A 78-amino-acid chain; its full sequence is Protein Vpr (78 aa).

The segment at 1–42 (MEQAPEDQGPQRKPHNEWTLELLEELKNEAVRHFPRIWLHGL) is homooligomerization.

The protein belongs to the HIV-1 VPR protein family. In terms of assembly, homooligomer, may form homodimer. Interacts with p6-gag region of the Pr55 Gag precursor protein through a (Leu-X-X)4 motif near the C-terminus of the P6gag protein. Interacts with host UNG. May interact with host RAD23A/HHR23A. Interacts with host VPRBP/DCAF1, leading to hijack the CUL4A-RBX1-DDB1-DCAF1/VPRBP complex, mediating ubiquitination of host proteins such as TERT and ZGPAT and arrest of the cell cycle in G2 phase. In terms of processing, phosphorylated on several residues by host. These phosphorylations regulate VPR activity for the nuclear import of the HIV-1 pre-integration complex.

The protein resides in the virion. The protein localises to the host nucleus. It is found in the host extracellular space. Its function is as follows. During virus replication, may deplete host UNG protein, and incude G2-M cell cycle arrest. Acts by targeting specific host proteins for degradation by the 26S proteasome, through association with the cellular CUL4A-DDB1 E3 ligase complex by direct interaction with host VPRPB/DCAF-1. Cell cycle arrest reportedly occurs within hours of infection and is not blocked by antiviral agents, suggesting that it is initiated by the VPR carried into the virion. Additionally, VPR induces apoptosis in a cell cycle dependent manner suggesting that these two effects are mechanistically linked. Detected in the serum and cerebrospinal fluid of AIDS patient, VPR may also induce cell death to bystander cells. In terms of biological role, during virus entry, plays a role in the transport of the viral pre-integration (PIC) complex to the host nucleus. This function is crucial for viral infection of non-dividing macrophages. May act directly at the nuclear pore complex, by binding nucleoporins phenylalanine-glycine (FG)-repeat regions. The chain is Protein Vpr from Homo sapiens (Human).